The sequence spans 334 residues: Adenine deaminase (334 aa).

3 residues coordinate Zn(2+): His-14, His-16, and His-194. Glu-197 (proton donor) is an active-site residue. Asp-275 contributes to the Zn(2+) binding site. Asp-276 is a binding site for substrate.

The protein belongs to the metallo-dependent hydrolases superfamily. Adenosine and AMP deaminases family. Adenine deaminase type 2 subfamily. Zn(2+) is required as a cofactor.

It carries out the reaction adenine + H2O + H(+) = hypoxanthine + NH4(+). In terms of biological role, catalyzes the hydrolytic deamination of adenine to hypoxanthine. Plays an important role in the purine salvage pathway and in nitrogen catabolism. This Hahella chejuensis (strain KCTC 2396) protein is Adenine deaminase.